The sequence spans 326 residues: Biotin synthase (326 aa).

One can recognise a Radical SAM core domain in the interval 51-278 (NEVQRSTLLS…TSYVRLSAGR (228 aa)). The [4Fe-4S] cluster site is built by cysteine 66, cysteine 70, and cysteine 73. The [2Fe-2S] cluster site is built by cysteine 110, cysteine 141, cysteine 201, and arginine 273.

The protein belongs to the radical SAM superfamily. Biotin synthase family. In terms of assembly, homodimer. [4Fe-4S] cluster serves as cofactor. [2Fe-2S] cluster is required as a cofactor.

The enzyme catalyses (4R,5S)-dethiobiotin + (sulfur carrier)-SH + 2 reduced [2Fe-2S]-[ferredoxin] + 2 S-adenosyl-L-methionine = (sulfur carrier)-H + biotin + 2 5'-deoxyadenosine + 2 L-methionine + 2 oxidized [2Fe-2S]-[ferredoxin]. It functions in the pathway cofactor biosynthesis; biotin biosynthesis; biotin from 7,8-diaminononanoate: step 2/2. Its function is as follows. Catalyzes the conversion of dethiobiotin (DTB) to biotin by the insertion of a sulfur atom into dethiobiotin via a radical-based mechanism. The protein is Biotin synthase of Azoarcus sp. (strain BH72).